A 474-amino-acid polypeptide reads, in one-letter code: Immunoglobulin heavy constant mu (474 aa).

Residues 1 to 105 are CH1; sequence GSASAPTLFP…NKEKNVPLPV (105 aa). Residues 1–450 are Extracellular-facing; the sequence is GSASAPTLFP…EEGFENLWAT (450 aa). Ig-like domains follow at residues 6–102, 111–211, 229–319, and 329–430; these read PTLF…KNVP, PKVS…QNAS, PSFA…QTIS, and PDVY…RTVD. 2 disulfides stabilise this stretch: Cys28-Cys88 and Cys134-Cys197. N-linked (GlcNAc...) (complex) asparagine glycosylation is present at Asn46. Positions 106–217 are CH2; the sequence is IAELPPKVSV…QNASSMCVPD (112 aa). The N-linked (GlcNAc...) (complex) asparagine glycan is linked to Asn209. The interval 218–323 is CH3; the sequence is QDTAIRVFAI…LKQTISRPKG (106 aa). 2 cysteine pairs are disulfide-bonded: Cys244-Cys303 and Cys351-Cys413. N-linked (GlcNAc...) asparagine glycosylation is found at Asn272 and Asn279. The interval 324 to 452 is CH4; that stretch reads VALHRPDVYL…GFENLWATAS (129 aa). Residues 437–453 form an important for IgM oligomerization region; it reads VSADEEGFENLWATAST. Asp440 carries an N-linked (GlcNAc...) asparagine glycan. The helical transmembrane segment at 451-471 threads the bilayer; that stretch reads ASTFIVLFLLSLFYSTTVTLF. At 472 to 474 the chain is on the cytoplasmic side; sequence KVK.

The basic structural unit of both sIgM and mIgM molecules consists of two identical heavy chains and two identical light chains; disulfide-linked. N-terminal variable regions of the heavy and light chains form the antigen binding sites, whereas the C-terminal constant regions of the heavy chains interact with immune receptors to mediate effector functions. In terms of assembly, part of IgM antibody. Forms high order oligomers, homopentamers stabilized by the JCHAIN and homohexamers that lack JCHAIN. The oligomerization amplifies an inherently low affinity of IgM antibodies for the antigen by multi-point attachment (avidity). Adjacent IgM protomers associate via interchain disulfide links to form an asymmetric pentameric structure with a 50 degree gap. A single copy of JCHAIN is covalently linked to the first and the fifth IgM monomers via interchain disulfide bonds thus closing the pentamer ring. Only JCHAIN-containing IgM binds PIGR secretory component (via D1-CDR1 region); this interaction is a prerequisite for IgM transcytosis across mucosal epithelium. Pentameric sIgM interacts (via CH4 domain) with FCRM (via Ig-like domain); the interaction is glycan-independent and multivalent theoretically involving up to eight binding sites for the IgM pentamer. Interacts with FCAMR; this interaction facilitates the endocytosis of IgM-coated microbes or IgM-antigen immune complexes. Antigen-bound IgM (via the Fc region) binds to globular domains of C1q component of the complement system, all three modules C1QA, C1QB and C1QC being involved in IgM binding; this interaction is multivalent. Pentameric sIgM (via Fc region) interacts with CD5L (via SRCR2) through interchain disulfide-linkages; this interaction protects CD5L from renal excretion and provides for high levels of CD5L in circulation. As to quaternary structure, part of IgM B cell receptor complex on pre-B cells, immature and mature B cells. The BCR complex consists of one membrane-bound IgM molecule responsible for antigen binding, non-covalently associated with CD79A and CD79B signaling chains. N-glycosylated; important for IgM secretion and its localization at the plasma membrane. The interaction with FCMR is glycan-independent.

The protein localises to the secreted. Its subcellular location is the cell membrane. Constant region of immunoglobulin heavy chains. Immunoglobulins, also known as antibodies, are membrane-bound or secreted glycoproteins produced by B lymphocytes. In the recognition phase of humoral immunity, the membrane-bound immunoglobulins serve as receptors which, upon binding of a specific antigen, trigger the clonal expansion and differentiation of B lymphocytes into immunoglobulins-secreting plasma cells. Secreted immunoglobulins mediate the effector phase of humoral immunity, which results in the elimination of bound antigens. The antigen binding site is formed by the variable domain of one heavy chain, together with that of its associated light chain. Thus, each immunoglobulin has two antigen binding sites with remarkable affinity for a particular antigen. The variable domains are assembled by a process called V-(D)-J rearrangement and can then be subjected to somatic hypermutations which, after exposure to antigen and selection, allow affinity maturation for a particular antigen. Its function is as follows. Constant region of secreted IgM (sIgM), also known as the Fc region of IgM antibody. Able to multimerize, forms high order polymers, mainly pentamers and occasionally hexamers, providing for multivalency and high avidity recognition of antigens. Natural sIgM are polyreactive and recognize conserved self- and pathogen-derived structures, whereas immune sIgM are secreted only upon exposure to pathogens and are antigen-specific. Both natural and immune sIgM are required for an efficient humoral immune response to infection. Mediates sIgM effector functions mostly via Fc receptors and the complement system. On lymphoid cells binds high-affinity Fc receptor FCMR and promotes induction of an efficient neutralizing IgG response while maintaining tolerance to self-antigens. Recruits C1q complement component to initiate the classical complement pathway, facilitating the recognition and neutralization of pathogens by the host. Together with C1q and mannose-binding lectin promotes the phagocytosis of apoptotic cells by macrophages, ensuring the clearance of potential autoimmune epitopes from tissues. Involved in mucosal immunity. It is transported by transcytosis across mucosal epithelium by PIGR and secreted on the apical side in complex with PIGR secretory component to scan mucosal lining for pathogens. IgM-antigen complexes undergo FCMR-mediated retrotranscytosis across mucosal M cells toward antigen-presenting cells in mucosal lymphoid tissues. In terms of biological role, constant region of membrane-bound IgM, part of the B cell receptor complex (BCR). IgM BCR provides constitutive tonic signaling for B cell survival. Mediates pre-BCR signaling that regulates B cell selection and rearrangement of Ig genes via allelic exclusion. In Homo sapiens (Human), this protein is Immunoglobulin heavy constant mu.